A 224-amino-acid polypeptide reads, in one-letter code: UPF0758 protein NE1464 (224 aa).

In terms of domain architecture, MPN spans 102-224 (IMDSPQSVRN…VVSFAERGLI (123 aa)). Zn(2+)-binding residues include His-173, His-175, and Asp-186. A JAMM motif motif is present at residues 173 to 186 (HNHPSGIAEPSTAD).

Belongs to the UPF0758 family.

The polypeptide is UPF0758 protein NE1464 (Nitrosomonas europaea (strain ATCC 19718 / CIP 103999 / KCTC 2705 / NBRC 14298)).